Reading from the N-terminus, the 45-residue chain is uncharacterized protein (45 aa).

This is an uncharacterized protein from Bacillus subtilis (strain 168).